Consider the following 80-residue polypeptide: Small ribosomal subunit protein bS16 (80 aa).

Belongs to the bacterial ribosomal protein bS16 family.

The sequence is that of Small ribosomal subunit protein bS16 from Hydrogenovibrio crunogenus (strain DSM 25203 / XCL-2) (Thiomicrospira crunogena).